Reading from the N-terminus, the 270-residue chain is Hydroxyethylthiazole kinase (270 aa).

Met-46 lines the substrate pocket. Positions 120 and 166 each coordinate ATP. Substrate is bound at residue Gly-193.

The protein belongs to the Thz kinase family. Mg(2+) is required as a cofactor.

The catalysed reaction is 5-(2-hydroxyethyl)-4-methylthiazole + ATP = 4-methyl-5-(2-phosphooxyethyl)-thiazole + ADP + H(+). It functions in the pathway cofactor biosynthesis; thiamine diphosphate biosynthesis; 4-methyl-5-(2-phosphoethyl)-thiazole from 5-(2-hydroxyethyl)-4-methylthiazole: step 1/1. In terms of biological role, catalyzes the phosphorylation of the hydroxyl group of 4-methyl-5-beta-hydroxyethylthiazole (THZ). In Herpetosiphon aurantiacus (strain ATCC 23779 / DSM 785 / 114-95), this protein is Hydroxyethylthiazole kinase.